Consider the following 385-residue polypeptide: Dual-specificity RNA methyltransferase RlmN (385 aa).

The Proton acceptor role is filled by Glu-113. The Radical SAM core domain maps to 120-352 (VGRAGALCVS…NRAGYASPIR (233 aa)). Cys-127 and Cys-363 are joined by a disulfide. Positions 134, 138, and 141 each coordinate [4Fe-4S] cluster. Residues 189-190 (GE), Ser-221, 243-245 (SLH), and Asn-320 contribute to the S-adenosyl-L-methionine site. Catalysis depends on Cys-363, which acts as the S-methylcysteine intermediate.

Belongs to the radical SAM superfamily. RlmN family. [4Fe-4S] cluster is required as a cofactor.

Its subcellular location is the cytoplasm. The enzyme catalyses adenosine(2503) in 23S rRNA + 2 reduced [2Fe-2S]-[ferredoxin] + 2 S-adenosyl-L-methionine = 2-methyladenosine(2503) in 23S rRNA + 5'-deoxyadenosine + L-methionine + 2 oxidized [2Fe-2S]-[ferredoxin] + S-adenosyl-L-homocysteine. The catalysed reaction is adenosine(37) in tRNA + 2 reduced [2Fe-2S]-[ferredoxin] + 2 S-adenosyl-L-methionine = 2-methyladenosine(37) in tRNA + 5'-deoxyadenosine + L-methionine + 2 oxidized [2Fe-2S]-[ferredoxin] + S-adenosyl-L-homocysteine. Functionally, specifically methylates position 2 of adenine 2503 in 23S rRNA and position 2 of adenine 37 in tRNAs. m2A2503 modification seems to play a crucial role in the proofreading step occurring at the peptidyl transferase center and thus would serve to optimize ribosomal fidelity. The sequence is that of Dual-specificity RNA methyltransferase RlmN from Phenylobacterium zucineum (strain HLK1).